Reading from the N-terminus, the 336-residue chain is Succinylglutamate desuccinylase (336 aa).

Zn(2+)-binding residues include His-59, Glu-62, and His-151. The active site involves Glu-215.

It belongs to the AspA/AstE family. Succinylglutamate desuccinylase subfamily. Zn(2+) is required as a cofactor.

The catalysed reaction is N-succinyl-L-glutamate + H2O = L-glutamate + succinate. Its pathway is amino-acid degradation; L-arginine degradation via AST pathway; L-glutamate and succinate from L-arginine: step 5/5. Transforms N(2)-succinylglutamate into succinate and glutamate. This chain is Succinylglutamate desuccinylase, found in Pseudomonas fluorescens (strain ATCC BAA-477 / NRRL B-23932 / Pf-5).